Reading from the N-terminus, the 140-residue chain is Small ribosomal subunit protein bS16 (140 aa).

Residues 86 to 140 (TVGKAKQAAKREEEAKQAAKEAAEAKAAAEAEAAAAAEAAKAEDAPDGETESSEG) form a disordered region. Basic and acidic residues predominate over residues 94-114 (AKREEEAKQAAKEAAEAKAAA). Residues 115–124 (EAEAAAAAEA) show a composition bias toward low complexity. The span at 130–140 (APDGETESSEG) shows a compositional bias: acidic residues.

The protein belongs to the bacterial ribosomal protein bS16 family.

The chain is Small ribosomal subunit protein bS16 from Parasynechococcus marenigrum (strain WH8102).